A 244-amino-acid chain; its full sequence is ATP synthase subunit 4, mitochondrial (244 aa).

The N-terminal 36 residues, 1 to 36, are a transit peptide targeting the mitochondrion; sequence MSSKLFCLRSFPSVQRTAWQRLVLPSTRKFSLTPTT.

This sequence belongs to the eukaryotic ATPase B chain family. F-type ATPases have 2 components, CF(1) - the catalytic core - and CF(0) - the membrane proton channel. In yeast, the dimeric form of ATP synthase consists of 17 polypeptides: alpha, beta, gamma, delta, epsilon, 4 (B), 5 (OSCP), 6 (A), 8, 9 (C), d, E (Tim11), f, g, h, i/j and k.

The protein resides in the mitochondrion. It localises to the mitochondrion inner membrane. Its function is as follows. Mitochondrial membrane ATP synthase (F(1)F(0) ATP synthase or Complex V) produces ATP from ADP in the presence of a proton gradient across the membrane which is generated by electron transport complexes of the respiratory chain. F-type ATPases consist of two structural domains, F(1) - containing the extramembraneous catalytic core, and F(0) - containing the membrane proton channel, linked together by a central stalk and a peripheral stalk. During catalysis, ATP synthesis in the catalytic domain of F(1) is coupled via a rotary mechanism of the central stalk subunits to proton translocation. Part of the complex F(0) domain and the peripheric stalk, which acts as a stator to hold the catalytic alpha(3)beta(3) subcomplex and subunit a/ATP6 static relative to the rotary elements. The chain is ATP synthase subunit 4, mitochondrial (atp4) from Schizosaccharomyces pombe (strain 972 / ATCC 24843) (Fission yeast).